Consider the following 324-residue polypeptide: Corticotropin-releasing factor-binding protein (324 aa).

An N-terminal signal peptide occupies residues 1–23 (MAPTLKLQCHFILVCLLALRGES). 5 disulfides stabilise this stretch: Cys-62–Cys-83, Cys-106–Cys-143, Cys-185–Cys-207, Cys-239–Cys-266, and Cys-279–Cys-320. Residue Asn-206 is glycosylated (N-linked (GlcNAc...) asparagine).

This sequence belongs to the CRF-binding protein family.

Its subcellular location is the secreted. Its function is as follows. Binds CRF and inactivates it. May prevent inappropriate pituitary-adrenal stimulation in pregnancy. In Ovis aries (Sheep), this protein is Corticotropin-releasing factor-binding protein (CRHBP).